The sequence spans 286 residues: Protoheme IX farnesyltransferase (286 aa).

The next 8 membrane-spanning stretches (helical) occupy residues 14 to 31 (FRLT…YILA), 38 to 58 (WLNL…ANII), 94 to 114 (LFLI…ALIL), 135 to 155 (IAVF…WIAV), 165 to 185 (VLFA…AWVL), 207 to 227 (TATI…LPYL), 228 to 248 (FGMS…LFFF), and 262 to 282 (ALLL…AFVL).

It belongs to the UbiA prenyltransferase family. Protoheme IX farnesyltransferase subfamily.

It is found in the cell inner membrane. It catalyses the reaction heme b + (2E,6E)-farnesyl diphosphate + H2O = Fe(II)-heme o + diphosphate. It participates in porphyrin-containing compound metabolism; heme O biosynthesis; heme O from protoheme: step 1/1. Converts heme B (protoheme IX) to heme O by substitution of the vinyl group on carbon 2 of heme B porphyrin ring with a hydroxyethyl farnesyl side group. The chain is Protoheme IX farnesyltransferase from Cytophaga hutchinsonii (strain ATCC 33406 / DSM 1761 / CIP 103989 / NBRC 15051 / NCIMB 9469 / D465).